We begin with the raw amino-acid sequence, 572 residues long: Potassium-transporting ATPase potassium-binding subunit (572 aa).

The next 11 helical transmembrane spans lie at 5–25 (LAAGLQIGFVILALAIAYVPL), 71–91 (VGYTLSLLGFSFASVIFLYVL), 97–117 (VLPLSGGLGAVSPAVAFNTAV), 142–162 (GLAVQNFVSAAVGLTVAVALI), 188–208 (ILLPLSFAVALILLSQGTIQS), 258–278 (PTPLSNVIEILAILIIPVCLT), 292–312 (LTVLSVMGTLFGGMLALVTWA), 387–407 (GLYGILVLAIIAVFVGGLLVG), 422–442 (ITMAALSVLVMPALVLVGTGI), 500–520 (LGMAMLLGRFLPIIFTLALAG), and 548–568 (GTVLLVAALTFFPALALGPIA).

The protein belongs to the KdpA family. As to quaternary structure, the system is composed of three essential subunits: KdpA, KdpB and KdpC.

Its subcellular location is the cell membrane. Part of the high-affinity ATP-driven potassium transport (or Kdp) system, which catalyzes the hydrolysis of ATP coupled with the electrogenic transport of potassium into the cytoplasm. This subunit binds the extracellular potassium ions and delivers the ions to the membrane domain of KdpB through an intramembrane tunnel. The sequence is that of Potassium-transporting ATPase potassium-binding subunit from Mycobacteroides abscessus (strain ATCC 19977 / DSM 44196 / CCUG 20993 / CIP 104536 / JCM 13569 / NCTC 13031 / TMC 1543 / L948) (Mycobacterium abscessus).